The chain runs to 171 residues: ATP synthase subunit b (171 aa).

A helical transmembrane segment spans residues isoleucine 4–glutamine 24.

It belongs to the ATPase B chain family. In terms of assembly, F-type ATPases have 2 components, F(1) - the catalytic core - and F(0) - the membrane proton channel. F(1) has five subunits: alpha(3), beta(3), gamma(1), delta(1), epsilon(1). F(0) has three main subunits: a(1), b(2) and c(10-14). The alpha and beta chains form an alternating ring which encloses part of the gamma chain. F(1) is attached to F(0) by a central stalk formed by the gamma and epsilon chains, while a peripheral stalk is formed by the delta and b chains.

The protein localises to the cell inner membrane. Its function is as follows. F(1)F(0) ATP synthase produces ATP from ADP in the presence of a proton or sodium gradient. F-type ATPases consist of two structural domains, F(1) containing the extramembraneous catalytic core and F(0) containing the membrane proton channel, linked together by a central stalk and a peripheral stalk. During catalysis, ATP synthesis in the catalytic domain of F(1) is coupled via a rotary mechanism of the central stalk subunits to proton translocation. In terms of biological role, component of the F(0) channel, it forms part of the peripheral stalk, linking F(1) to F(0). The chain is ATP synthase subunit b from Helicobacter hepaticus (strain ATCC 51449 / 3B1).